We begin with the raw amino-acid sequence, 280 residues long: Shikimate dehydrogenase (NADP(+)) (280 aa).

Residues 20–22 and Thr67 each bind shikimate; that span reads SLS. The Proton acceptor role is filled by Lys71. Shikimate-binding residues include Asn92 and Asp107. Residues 131–135 and Gly220 each bind NADP(+); that span reads GAGGA. Shikimate is bound at residue Tyr222. Gly243 lines the NADP(+) pocket.

The protein belongs to the shikimate dehydrogenase family. As to quaternary structure, homodimer.

The enzyme catalyses shikimate + NADP(+) = 3-dehydroshikimate + NADPH + H(+). The protein operates within metabolic intermediate biosynthesis; chorismate biosynthesis; chorismate from D-erythrose 4-phosphate and phosphoenolpyruvate: step 4/7. In terms of biological role, involved in the biosynthesis of the chorismate, which leads to the biosynthesis of aromatic amino acids. Catalyzes the reversible NADPH linked reduction of 3-dehydroshikimate (DHSA) to yield shikimate (SA). This is Shikimate dehydrogenase (NADP(+)) from Maricaulis maris (strain MCS10) (Caulobacter maris).